A 175-amino-acid chain; its full sequence is Crossover junction endodeoxyribonuclease RuvC (175 aa).

Catalysis depends on residues Asp-16, Glu-76, and Asp-148. Positions 16, 76, and 148 each coordinate Mg(2+).

It belongs to the RuvC family. As to quaternary structure, homodimer which binds Holliday junction (HJ) DNA. The HJ becomes 2-fold symmetrical on binding to RuvC with unstacked arms; it has a different conformation from HJ DNA in complex with RuvA. In the full resolvosome a probable DNA-RuvA(4)-RuvB(12)-RuvC(2) complex forms which resolves the HJ. Mg(2+) is required as a cofactor.

The protein resides in the cytoplasm. It carries out the reaction Endonucleolytic cleavage at a junction such as a reciprocal single-stranded crossover between two homologous DNA duplexes (Holliday junction).. The RuvA-RuvB-RuvC complex processes Holliday junction (HJ) DNA during genetic recombination and DNA repair. Endonuclease that resolves HJ intermediates. Cleaves cruciform DNA by making single-stranded nicks across the HJ at symmetrical positions within the homologous arms, yielding a 5'-phosphate and a 3'-hydroxyl group; requires a central core of homology in the junction. The consensus cleavage sequence is 5'-(A/T)TT(C/G)-3'. Cleavage occurs on the 3'-side of the TT dinucleotide at the point of strand exchange. HJ branch migration catalyzed by RuvA-RuvB allows RuvC to scan DNA until it finds its consensus sequence, where it cleaves and resolves the cruciform DNA. This chain is Crossover junction endodeoxyribonuclease RuvC, found in Bradyrhizobium sp. (strain ORS 278).